Here is a 371-residue protein sequence, read N- to C-terminus: Aminomethyltransferase (371 aa).

This sequence belongs to the GcvT family. The glycine cleavage system is composed of four proteins: P, T, L and H.

It catalyses the reaction N(6)-[(R)-S(8)-aminomethyldihydrolipoyl]-L-lysyl-[protein] + (6S)-5,6,7,8-tetrahydrofolate = N(6)-[(R)-dihydrolipoyl]-L-lysyl-[protein] + (6R)-5,10-methylene-5,6,7,8-tetrahydrofolate + NH4(+). In terms of biological role, the glycine cleavage system catalyzes the degradation of glycine. The protein is Aminomethyltransferase of Nitrosococcus oceani (strain ATCC 19707 / BCRC 17464 / JCM 30415 / NCIMB 11848 / C-107).